Reading from the N-terminus, the 345-residue chain is S-adenosylmethionine:tRNA ribosyltransferase-isomerase (345 aa).

The protein belongs to the QueA family. Monomer.

It localises to the cytoplasm. The catalysed reaction is 7-aminomethyl-7-carbaguanosine(34) in tRNA + S-adenosyl-L-methionine = epoxyqueuosine(34) in tRNA + adenine + L-methionine + 2 H(+). Its pathway is tRNA modification; tRNA-queuosine biosynthesis. In terms of biological role, transfers and isomerizes the ribose moiety from AdoMet to the 7-aminomethyl group of 7-deazaguanine (preQ1-tRNA) to give epoxyqueuosine (oQ-tRNA). This is S-adenosylmethionine:tRNA ribosyltransferase-isomerase from Shewanella loihica (strain ATCC BAA-1088 / PV-4).